The following is a 331-amino-acid chain: MTLSIRHDWTTEEIQTLLELPLMELLWEAQTVHRKANPGYRVQLASLLSVKTGGCEEDCAYCSQSIHNSSDVTAFEAQMQVEPVLQRARAAKEAGADRFCMGWAWREIRDGAPFEAMLEMVRGVRGMGMEACVTAGMLTDQQAERLAEAGLTAYNHNLDTSPEHYDRIISTRTYQERLETLERVRKAGVTLCCGGIIGMGETLRDRASMLQVLASMNPHPESVPVNGLVAVEGTPLEDQAPFEPLELVRMVATARILMPHARVRLSAGRESMSREAQILCLQAGADSIFYGDVLLTTGNPDVEADRQLLSDAGVTANWQEETAAPVNCSPR.

The Radical SAM core domain maps to Y40 to R269. 3 residues coordinate [4Fe-4S] cluster: C55, C59, and C62. The [2Fe-2S] cluster site is built by C100, C132, C192, and R264.

The protein belongs to the radical SAM superfamily. Biotin synthase family. In terms of assembly, homodimer. Requires [4Fe-4S] cluster as cofactor. The cofactor is [2Fe-2S] cluster.

It carries out the reaction (4R,5S)-dethiobiotin + (sulfur carrier)-SH + 2 reduced [2Fe-2S]-[ferredoxin] + 2 S-adenosyl-L-methionine = (sulfur carrier)-H + biotin + 2 5'-deoxyadenosine + 2 L-methionine + 2 oxidized [2Fe-2S]-[ferredoxin]. Its pathway is cofactor biosynthesis; biotin biosynthesis; biotin from 7,8-diaminononanoate: step 2/2. In terms of biological role, catalyzes the conversion of dethiobiotin (DTB) to biotin by the insertion of a sulfur atom into dethiobiotin via a radical-based mechanism. The chain is Biotin synthase from Synechococcus sp. (strain CC9605).